A 73-amino-acid chain; its full sequence is Sec-independent protein translocase protein TatA (73 aa).

The chain crosses the membrane as a helical span at residues 1 to 21 (MGSFSIWHWLIVLVIVMLVFG). The segment at 50–73 (KEQIQQSSATAEKTVDVQAKDVNK) is disordered. Residues 62 to 73 (KTVDVQAKDVNK) are compositionally biased toward basic and acidic residues.

It belongs to the TatA/E family. In terms of assembly, the Tat system comprises two distinct complexes: a TatABC complex, containing multiple copies of TatA, TatB and TatC subunits, and a separate TatA complex, containing only TatA subunits. Substrates initially bind to the TatABC complex, which probably triggers association of the separate TatA complex to form the active translocon.

The protein resides in the cell inner membrane. Functionally, part of the twin-arginine translocation (Tat) system that transports large folded proteins containing a characteristic twin-arginine motif in their signal peptide across membranes. TatA could form the protein-conducting channel of the Tat system. In Polynucleobacter necessarius subsp. necessarius (strain STIR1), this protein is Sec-independent protein translocase protein TatA.